Consider the following 199-residue polypeptide: Holliday junction branch migration complex subunit RuvA (199 aa).

Residues 1–65 (MIGWLHGQII…EDALLLYGFL (65 aa)) are domain I. Positions 66–144 (DKEERSLFRS…QFDGSVSDTF (79 aa)) are domain II. The interval 144-148 (FQKQA) is flexible linker. The domain III stretch occupies residues 149 to 199 (GSTHSQQEAISALEALGYKPQEAWKVMNKIDNGNKSCEQLIREALQILSSR).

The protein belongs to the RuvA family. In terms of assembly, homotetramer. Forms an RuvA(8)-RuvB(12)-Holliday junction (HJ) complex. HJ DNA is sandwiched between 2 RuvA tetramers; dsDNA enters through RuvA and exits via RuvB. An RuvB hexamer assembles on each DNA strand where it exits the tetramer. Each RuvB hexamer is contacted by two RuvA subunits (via domain III) on 2 adjacent RuvB subunits; this complex drives branch migration. In the full resolvosome a probable DNA-RuvA(4)-RuvB(12)-RuvC(2) complex forms which resolves the HJ.

The protein resides in the cytoplasm. The RuvA-RuvB-RuvC complex processes Holliday junction (HJ) DNA during genetic recombination and DNA repair, while the RuvA-RuvB complex plays an important role in the rescue of blocked DNA replication forks via replication fork reversal (RFR). RuvA specifically binds to HJ cruciform DNA, conferring on it an open structure. The RuvB hexamer acts as an ATP-dependent pump, pulling dsDNA into and through the RuvAB complex. HJ branch migration allows RuvC to scan DNA until it finds its consensus sequence, where it cleaves and resolves the cruciform DNA. This Legionella pneumophila subsp. pneumophila (strain Philadelphia 1 / ATCC 33152 / DSM 7513) protein is Holliday junction branch migration complex subunit RuvA.